We begin with the raw amino-acid sequence, 132 residues long: EF-hand calcium-binding domain-containing protein 10 (132 aa).

2 consecutive EF-hand domains span residues 64-99 and 120-132; these read MDNS…LGLC and EMNK…WSMF.

The sequence is that of EF-hand calcium-binding domain-containing protein 10 (Efcab10) from Mus musculus (Mouse).